The sequence spans 290 residues: uncharacterized protein (290 aa).

This is an uncharacterized protein from Escherichia phage lambda (Bacteriophage lambda).